A 558-amino-acid chain; its full sequence is uncharacterized protein (558 aa).

Transmembrane regions (helical) follow at residues 21-41 (IFCFYIYCILFGSLLLFLPIA), 69-89 (FLDALFLSTSAFSDTGLSTVV), 100-120 (IVLAVLLQLGGIGFVVIAFLA), 160-180 (IIFLFIVELIYGFLYGILFYF), 220-240 (AFQAGFFHSLSAVNNAGIDLI), 251-271 (GLGIIIQWLTISQIIFGGIGY), 303-323 (VITNIVVILLFFTLLLMVEFI), 386-406 (VFPVASEIQTTKIIIALAMFI), 413-433 (TAGGIRTTTLAVIFLALVAKF), 454-474 (AFLVLIISLIAVLLTAVLLPL), 479-499 (PVSFIDALFETTSAFGTVGLS), and 519-539 (ALCLLMVMGQVGVSSSVLTFV).

Belongs to the TrkH potassium transport family.

The protein resides in the cell membrane. This is an uncharacterized protein from Mycoplasma genitalium (strain ATCC 33530 / DSM 19775 / NCTC 10195 / G37) (Mycoplasmoides genitalium).